The sequence spans 158 residues: Chromobox protein homolog 7 (158 aa).

The region spanning 11–69 (FAVESIRKKRVRKGKVEYLVKWKGWPPKYSTWEPEEHILDPRLVMAYEEKEEKDRASGY) is the Chromo domain. Residues 60–124 (KEEKDRASGY…PPPWTPMLPS (65 aa)) are disordered. The span at 68 to 78 (GYRKRGPKPKR) shows a compositional bias: basic residues.

Component of a PRC1-like complex. Distinct PRC1-like core complexes are composed of a RING1 subunit (RING1B or RING1A), one of the six PCGF proteins (PCGF1-6), one PHC protein (PHC1-3) and one of the CBX proteins (CBX2, CBX4, CBX6, CBX7 or CBX8). The composition of the PRC1 complex may differ between the PRC1 complex in pluripotent embryonic stem cells containing RNF2, CBX7 and PCGF2, and the PRC1 complex in differentiating cells containing RNF2, CBX2, CBX4 and BMI1. Interacts with RING1. Interacts with RNF2/RING1B. Interacts with PCGF1, PCGF2, PCGF3, PCGF5 and PCGF6. Interacts (via chromodomain) with histone H3K9Me3 and H3K27me3. Interacts with H3K9Me2 and H4K20Me1. Interacts (via chromodomain) with single-stranded and double-stranded RNA; RNA binding seems to be required for the localization to chromatin.

Its subcellular location is the nucleus. The protein resides in the chromosome. Component of a Polycomb group (PcG) multiprotein PRC1-like complex, a complex class required to maintain the transcriptionally repressive state of many genes, including Hox genes, throughout development. PcG PRC1 complex acts via chromatin remodeling and modification of histones; it mediates monoubiquitination of histone H2A 'Lys-119', rendering chromatin heritably changed in its expressibility. Promotes histone H3 trimethylation at 'Lys-9' (H3K9me3). Binds to histone H3 trimethylated 'Lys-9' (H3K9me3) or at 'Lys-27' (H3K27me3). May possibly also bind trimethylated lysine residues in other proteins (in vitro). Binds non-coding, single-stranded and double-stranded RNA. Plays a role in the timely repression of differentiation-specific genes in pluripotent embryonic stem cells to maintain the undifferentiated state. Regulator of cellular lifespan by maintaining the repression of CDKN2A, but not by inducing telomerase activity. The sequence is that of Chromobox protein homolog 7 (Cbx7) from Rattus norvegicus (Rat).